A 136-amino-acid chain; its full sequence is Translation initiation factor 5A (136 aa).

K37 is subject to Hypusine.

This sequence belongs to the eIF-5A family.

It is found in the cytoplasm. Functionally, functions by promoting the formation of the first peptide bond. The protein is Translation initiation factor 5A (eIF5A) of Thermococcus gammatolerans (strain DSM 15229 / JCM 11827 / EJ3).